We begin with the raw amino-acid sequence, 648 residues long: Phosphomethylpyrimidine synthase (648 aa).

Substrate contacts are provided by residues asparagine 236, methionine 265, tyrosine 294, histidine 330, 350-352 (SRG), 391-394 (DGLR), and glutamate 430. Histidine 434 lines the Zn(2+) pocket. Tyrosine 457 serves as a coordination point for substrate. Position 498 (histidine 498) interacts with Zn(2+). The [4Fe-4S] cluster site is built by cysteine 578, cysteine 581, and cysteine 586.

This sequence belongs to the ThiC family. Homodimer. [4Fe-4S] cluster is required as a cofactor.

It catalyses the reaction 5-amino-1-(5-phospho-beta-D-ribosyl)imidazole + S-adenosyl-L-methionine = 4-amino-2-methyl-5-(phosphooxymethyl)pyrimidine + CO + 5'-deoxyadenosine + formate + L-methionine + 3 H(+). Its pathway is cofactor biosynthesis; thiamine diphosphate biosynthesis. Functionally, catalyzes the synthesis of the hydroxymethylpyrimidine phosphate (HMP-P) moiety of thiamine from aminoimidazole ribotide (AIR) in a radical S-adenosyl-L-methionine (SAM)-dependent reaction. This Aliivibrio salmonicida (strain LFI1238) (Vibrio salmonicida (strain LFI1238)) protein is Phosphomethylpyrimidine synthase.